The following is a 129-amino-acid chain: uncharacterized protein (129 aa).

The next 3 helical transmembrane spans lie at 49-69, 72-92, and 101-118; these read LWSL…IVGV, FTIF…NLIF, and YFNC…NLLQ.

The protein localises to the membrane. This is an uncharacterized protein from Saccharomyces cerevisiae (strain ATCC 204508 / S288c) (Baker's yeast).